The primary structure comprises 300 residues: NAD kinase (300 aa).

Catalysis depends on Asp75, which acts as the Proton acceptor. Residues 75–76 (DG), 149–150 (ND), Arg177, Asp179, 190–195 (TAYALS), Ala214, and Gln248 each bind NAD(+).

Belongs to the NAD kinase family. A divalent metal cation serves as cofactor.

Its subcellular location is the cytoplasm. It carries out the reaction NAD(+) + ATP = ADP + NADP(+) + H(+). Its function is as follows. Involved in the regulation of the intracellular balance of NAD and NADP, and is a key enzyme in the biosynthesis of NADP. Catalyzes specifically the phosphorylation on 2'-hydroxyl of the adenosine moiety of NAD to yield NADP. The polypeptide is NAD kinase (Burkholderia lata (strain ATCC 17760 / DSM 23089 / LMG 22485 / NCIMB 9086 / R18194 / 383)).